Here is a 253-residue protein sequence, read N- to C-terminus: 5'/3'-nucleotidase SurE (253 aa).

Residues Asp-8, Asp-9, Ser-39, and Asn-92 each coordinate a divalent metal cation.

The protein belongs to the SurE nucleotidase family. A divalent metal cation is required as a cofactor.

It is found in the cytoplasm. It catalyses the reaction a ribonucleoside 5'-phosphate + H2O = a ribonucleoside + phosphate. It carries out the reaction a ribonucleoside 3'-phosphate + H2O = a ribonucleoside + phosphate. The catalysed reaction is [phosphate](n) + H2O = [phosphate](n-1) + phosphate + H(+). Functionally, nucleotidase with a broad substrate specificity as it can dephosphorylate various ribo- and deoxyribonucleoside 5'-monophosphates and ribonucleoside 3'-monophosphates with highest affinity to 3'-AMP. Also hydrolyzes polyphosphate (exopolyphosphatase activity) with the preference for short-chain-length substrates (P20-25). Might be involved in the regulation of dNTP and NTP pools, and in the turnover of 3'-mononucleotides produced by numerous intracellular RNases (T1, T2, and F) during the degradation of various RNAs. In Escherichia coli O7:K1 (strain IAI39 / ExPEC), this protein is 5'/3'-nucleotidase SurE.